Here is a 461-residue protein sequence, read N- to C-terminus: Photosystem II CP43 reaction center protein (461 aa).

The propeptide occupies 1 to 2; sequence ME. Thr3 carries the N-acetylthreonine modification. Thr3 bears the Phosphothreonine mark. 5 helical membrane-spanning segments follow: residues 57-81, 122-143, 166-188, 243-263, and 279-300; these read LFEV…PHLA, LIGP…KDKN, KALY…RIIT, QPWA…LSYS, and WFNN…ASQS. Glu355 is a binding site for [CaMn4O5] cluster. Residues 435-459 traverse the membrane as a helical segment; the sequence is RARAAAAGFEKGIDRFNEPTLSLRP.

This sequence belongs to the PsbB/PsbC family. PsbC subfamily. In terms of assembly, PSII is composed of 1 copy each of membrane proteins PsbA, PsbB, PsbC, PsbD, PsbE, PsbF, PsbH, PsbI, PsbJ, PsbK, PsbL, PsbM, PsbT, PsbX, PsbY, PsbZ, Psb30/Ycf12, at least 3 peripheral proteins of the oxygen-evolving complex and a large number of cofactors. It forms dimeric complexes. It depends on Binds multiple chlorophylls and provides some of the ligands for the Ca-4Mn-5O cluster of the oxygen-evolving complex. It may also provide a ligand for a Cl- that is required for oxygen evolution. PSII binds additional chlorophylls, carotenoids and specific lipids. as a cofactor.

It localises to the plastid. Its subcellular location is the chloroplast thylakoid membrane. In terms of biological role, one of the components of the core complex of photosystem II (PSII). It binds chlorophyll and helps catalyze the primary light-induced photochemical processes of PSII. PSII is a light-driven water:plastoquinone oxidoreductase, using light energy to abstract electrons from H(2)O, generating O(2) and a proton gradient subsequently used for ATP formation. This Oedogonium cardiacum (Filamentous green alga) protein is Photosystem II CP43 reaction center protein.